The following is a 416-amino-acid chain: Tryptophan synthase beta chain (416 aa).

The residue at position 109 (Lys109) is an N6-(pyridoxal phosphate)lysine.

Belongs to the TrpB family. Tetramer of two alpha and two beta chains. It depends on pyridoxal 5'-phosphate as a cofactor.

The enzyme catalyses (1S,2R)-1-C-(indol-3-yl)glycerol 3-phosphate + L-serine = D-glyceraldehyde 3-phosphate + L-tryptophan + H2O. It functions in the pathway amino-acid biosynthesis; L-tryptophan biosynthesis; L-tryptophan from chorismate: step 5/5. The beta subunit is responsible for the synthesis of L-tryptophan from indole and L-serine. The polypeptide is Tryptophan synthase beta chain (Synechococcus sp. (strain WH7803)).